Reading from the N-terminus, the 445-residue chain is 3-phosphoshikimate 1-carboxyvinyltransferase (445 aa).

Residues lysine 34, serine 35, and arginine 39 each coordinate 3-phosphoshikimate. Position 34 (lysine 34) interacts with phosphoenolpyruvate. Residues glycine 112 and arginine 140 each coordinate phosphoenolpyruvate. Positions 186, 187, 188, 216, 331, and 358 each coordinate 3-phosphoshikimate. Phosphoenolpyruvate is bound at residue glutamine 188. Glutamate 331 functions as the Proton acceptor in the catalytic mechanism. Positions 362, 403, and 428 each coordinate phosphoenolpyruvate.

The protein belongs to the EPSP synthase family. Monomer.

The protein resides in the cytoplasm. The catalysed reaction is 3-phosphoshikimate + phosphoenolpyruvate = 5-O-(1-carboxyvinyl)-3-phosphoshikimate + phosphate. It participates in metabolic intermediate biosynthesis; chorismate biosynthesis; chorismate from D-erythrose 4-phosphate and phosphoenolpyruvate: step 6/7. Catalyzes the transfer of the enolpyruvyl moiety of phosphoenolpyruvate (PEP) to the 5-hydroxyl of shikimate-3-phosphate (S3P) to produce enolpyruvyl shikimate-3-phosphate and inorganic phosphate. In Kocuria rhizophila (strain ATCC 9341 / DSM 348 / NBRC 103217 / DC2201), this protein is 3-phosphoshikimate 1-carboxyvinyltransferase.